Consider the following 249-residue polypeptide: Ubiquinone/menaquinone biosynthesis C-methyltransferase UbiE (249 aa).

Residues T74, D93, and 121–122 (DA) contribute to the S-adenosyl-L-methionine site.

It belongs to the class I-like SAM-binding methyltransferase superfamily. MenG/UbiE family.

The enzyme catalyses a 2-demethylmenaquinol + S-adenosyl-L-methionine = a menaquinol + S-adenosyl-L-homocysteine + H(+). It carries out the reaction a 2-methoxy-6-(all-trans-polyprenyl)benzene-1,4-diol + S-adenosyl-L-methionine = a 5-methoxy-2-methyl-3-(all-trans-polyprenyl)benzene-1,4-diol + S-adenosyl-L-homocysteine + H(+). It functions in the pathway quinol/quinone metabolism; menaquinone biosynthesis; menaquinol from 1,4-dihydroxy-2-naphthoate: step 2/2. Its pathway is cofactor biosynthesis; ubiquinone biosynthesis. Its function is as follows. Methyltransferase required for the conversion of demethylmenaquinol (DMKH2) to menaquinol (MKH2) and the conversion of 2-polyprenyl-6-methoxy-1,4-benzoquinol (DDMQH2) to 2-polyprenyl-3-methyl-6-methoxy-1,4-benzoquinol (DMQH2). This is Ubiquinone/menaquinone biosynthesis C-methyltransferase UbiE from Acidiphilium cryptum (strain JF-5).